The primary structure comprises 349 residues: Phosphoribosylformylglycinamidine cyclo-ligase (349 aa).

It belongs to the AIR synthase family.

It is found in the cytoplasm. It carries out the reaction 2-formamido-N(1)-(5-O-phospho-beta-D-ribosyl)acetamidine + ATP = 5-amino-1-(5-phospho-beta-D-ribosyl)imidazole + ADP + phosphate + H(+). Its pathway is purine metabolism; IMP biosynthesis via de novo pathway; 5-amino-1-(5-phospho-D-ribosyl)imidazole from N(2)-formyl-N(1)-(5-phospho-D-ribosyl)glycinamide: step 2/2. This Methanococcus maripaludis (strain C5 / ATCC BAA-1333) protein is Phosphoribosylformylglycinamidine cyclo-ligase.